A 263-amino-acid chain; its full sequence is MNDNFKKQPHHLIYEELLQQGITLGITTRGDGLSDYPKNAFNMARYIDDCPYNITQHQLQLAEEIAFDRKNWVFPIQTHENKVACITKDDIGTNIDTLTDALHGIDAMYTYDSNVLLTMCYADCVPVYFYSTKHHFIALAHAGWRGTYTEIVKEVLKHVNFDLKDLHVVIGPSTSSSYEINDDIKNKFETLPIDSANYIETRGRDRHGIDLKKANAALLNNYGVPKENIYTTAYATSEHLELFFSYRLEKGQTGRMLAFIGQQ.

3 residues coordinate Zn(2+): His-79, Cys-124, and His-141.

Belongs to the purine nucleoside phosphorylase YfiH/LACC1 family. Homodimer. The cofactor is Cu(2+). Zn(2+) is required as a cofactor.

It catalyses the reaction adenosine + phosphate = alpha-D-ribose 1-phosphate + adenine. The enzyme catalyses S-methyl-5'-thioadenosine + phosphate = 5-(methylsulfanyl)-alpha-D-ribose 1-phosphate + adenine. It carries out the reaction inosine + phosphate = alpha-D-ribose 1-phosphate + hypoxanthine. The catalysed reaction is adenosine + H2O + H(+) = inosine + NH4(+). Purine nucleoside enzyme that catalyzes the phosphorolysis of adenosine and inosine nucleosides, yielding D-ribose 1-phosphate and the respective free bases, adenine and hypoxanthine. Also catalyzes the phosphorolysis of S-methyl-5'-thioadenosine into adenine and S-methyl-5-thio-alpha-D-ribose 1-phosphate. Also has adenosine deaminase activity. This is Purine nucleoside phosphorylase SAR1163 from Staphylococcus aureus (strain MRSA252).